An 81-amino-acid chain; its full sequence is uncharacterized protein (81 aa).

The next 2 helical transmembrane spans lie at Phe10 to Leu30 and Val56 to Ile76.

Its subcellular location is the host membrane. This is an uncharacterized protein from Acidianus two-tailed virus (ATV).